A 351-amino-acid chain; its full sequence is Holliday junction branch migration complex subunit RuvB (351 aa).

The segment at 1-186 (MDEKIETRLI…FGIVQRLEFY (186 aa)) is large ATPase domain (RuvB-L). Residues isoleucine 25, arginine 26, glycine 67, lysine 70, threonine 71, threonine 72, 133–135 (EDF), arginine 176, tyrosine 186, and arginine 223 each bind ATP. A Mg(2+)-binding site is contributed by threonine 71. Positions 187 to 257 (RIPDLIHIVK…IAKEALDLLN (71 aa)) are small ATPAse domain (RuvB-S). Residues 260 to 351 (IRGLDVMDRK…ENFDLLGKVE (92 aa)) are head domain (RuvB-H). Arginine 296, arginine 315, and arginine 320 together coordinate DNA.

Belongs to the RuvB family. Homohexamer. Forms an RuvA(8)-RuvB(12)-Holliday junction (HJ) complex. HJ DNA is sandwiched between 2 RuvA tetramers; dsDNA enters through RuvA and exits via RuvB. An RuvB hexamer assembles on each DNA strand where it exits the tetramer. Each RuvB hexamer is contacted by two RuvA subunits (via domain III) on 2 adjacent RuvB subunits; this complex drives branch migration. In the full resolvosome a probable DNA-RuvA(4)-RuvB(12)-RuvC(2) complex forms which resolves the HJ.

It is found in the cytoplasm. It carries out the reaction ATP + H2O = ADP + phosphate + H(+). Functionally, the RuvA-RuvB-RuvC complex processes Holliday junction (HJ) DNA during genetic recombination and DNA repair, while the RuvA-RuvB complex plays an important role in the rescue of blocked DNA replication forks via replication fork reversal (RFR). RuvA specifically binds to HJ cruciform DNA, conferring on it an open structure. The RuvB hexamer acts as an ATP-dependent pump, pulling dsDNA into and through the RuvAB complex. RuvB forms 2 homohexamers on either side of HJ DNA bound by 1 or 2 RuvA tetramers; 4 subunits per hexamer contact DNA at a time. Coordinated motions by a converter formed by DNA-disengaged RuvB subunits stimulates ATP hydrolysis and nucleotide exchange. Immobilization of the converter enables RuvB to convert the ATP-contained energy into a lever motion, pulling 2 nucleotides of DNA out of the RuvA tetramer per ATP hydrolyzed, thus driving DNA branch migration. The RuvB motors rotate together with the DNA substrate, which together with the progressing nucleotide cycle form the mechanistic basis for DNA recombination by continuous HJ branch migration. Branch migration allows RuvC to scan DNA until it finds its consensus sequence, where it cleaves and resolves cruciform DNA. The chain is Holliday junction branch migration complex subunit RuvB from Coxiella burnetii (strain CbuG_Q212) (Coxiella burnetii (strain Q212)).